The chain runs to 102 residues: MQKARIRLTGTDYEKVETVCTRIREIAERTGVNMAGPIPLPTKRLIVPIRKSPDGEGTATWDRWQMRVHKRLIDLDADERALRQLMRIQVPKDISIEIVLEN.

It belongs to the universal ribosomal protein uS10 family. Part of the 30S ribosomal subunit.

In terms of biological role, involved in the binding of tRNA to the ribosomes. This Methanocorpusculum labreanum (strain ATCC 43576 / DSM 4855 / Z) protein is Small ribosomal subunit protein uS10.